The chain runs to 376 residues: Queuine tRNA-ribosyltransferase (376 aa).

D89 (proton acceptor) is an active-site residue. Residues 89-93, D143, Q194, and G221 each bind substrate; that span reads DSGGF. Positions 252-258 are RNA binding; that stretch reads GVGIPSN. Residue D271 is the Nucleophile of the active site. Residues 276 to 280 are RNA binding; important for wobble base 34 recognition; that stretch reads ARNGR. The Zn(2+) site is built by C309, C311, C314, and H340.

The protein belongs to the queuine tRNA-ribosyltransferase family. In terms of assembly, homodimer. Within each dimer, one monomer is responsible for RNA recognition and catalysis, while the other monomer binds to the replacement base PreQ1. Requires Zn(2+) as cofactor.

The enzyme catalyses 7-aminomethyl-7-carbaguanine + guanosine(34) in tRNA = 7-aminomethyl-7-carbaguanosine(34) in tRNA + guanine. The protein operates within tRNA modification; tRNA-queuosine biosynthesis. In terms of biological role, catalyzes the base-exchange of a guanine (G) residue with the queuine precursor 7-aminomethyl-7-deazaguanine (PreQ1) at position 34 (anticodon wobble position) in tRNAs with GU(N) anticodons (tRNA-Asp, -Asn, -His and -Tyr). Catalysis occurs through a double-displacement mechanism. The nucleophile active site attacks the C1' of nucleotide 34 to detach the guanine base from the RNA, forming a covalent enzyme-RNA intermediate. The proton acceptor active site deprotonates the incoming PreQ1, allowing a nucleophilic attack on the C1' of the ribose to form the product. After dissociation, two additional enzymatic reactions on the tRNA convert PreQ1 to queuine (Q), resulting in the hypermodified nucleoside queuosine (7-(((4,5-cis-dihydroxy-2-cyclopenten-1-yl)amino)methyl)-7-deazaguanosine). The polypeptide is Queuine tRNA-ribosyltransferase (Clostridium botulinum (strain Okra / Type B1)).